Here is a 556-residue protein sequence, read N- to C-terminus: Energy-dependent translational throttle protein EttA (556 aa).

ABC transporter domains follow at residues 7–260 (YTMH…EQEQ) and 325–551 (IEVQ…RIKY). 40 to 47 (GLNGAGKS) is an ATP binding site. An arm region spans residues 96–140 (SEVKNALTRLDEVYALYADPDADFDKLAAEQANLEAIIQAHDGHN). The segment at 243-323 (GNYSSWLEQK…IPPGPRLGDK (81 aa)) is ptIM. 357-364 (GANGAGKS) lines the ATP pocket.

It belongs to the ABC transporter superfamily. ABCF family. Translational throttle EttA subfamily. Monomer. Probably contacts ribosomal proteins L1, L5, L33 and S7, the 16S and 23S rRNA and the P-site containing tRNA(fMet).

The protein localises to the cytoplasm. The catalysed reaction is ATP + H2O = ADP + phosphate + H(+). Its function is as follows. A translation factor that gates the progression of the 70S ribosomal initiation complex (IC, containing tRNA(fMet) in the P-site) into the translation elongation cycle by using a mechanism sensitive to the ATP/ADP ratio. Binds to the 70S ribosome E-site where it modulates the state of the translating ribosome during subunit translocation. ATP hydrolysis probably frees it from the ribosome, which can enter the elongation phase. This is Energy-dependent translational throttle protein EttA from Haemophilus influenzae (strain ATCC 51907 / DSM 11121 / KW20 / Rd).